A 123-amino-acid chain; its full sequence is Secreted RxLR effector protein RXLR-C21 (123 aa).

Residues 1 to 23 (MRLHLLVLSVIVVSLLVSDNAHA) form the signal peptide. A RxLR-dEER motif is present at residues 32–65 (RALRETPINGLVTNQLAVSRNLTPAKFITNSEER). A helical transmembrane segment spans residues 101–121 (VTTICSIVLFVMVFGCLYKIF).

Belongs to the RxLR effector family.

The protein resides in the secreted. It localises to the host endoplasmic reticulum membrane. Secreted effector that does not suppress pattern-triggered immunity (PTI) in plant host. The sequence is that of Secreted RxLR effector protein RXLR-C21 from Plasmopara halstedii (Downy mildew of sunflower).